We begin with the raw amino-acid sequence, 469 residues long: Receptor-type adenylate cyclase (469 aa).

The Extracellular segment spans residues 1–59 (VDTAEKLSKNGCASNYGATQISVWSMARALNASIPPLTNPMTPSMTFRNSNAGRISGVA). An N-linked (GlcNAc...) asparagine glycan is attached at N31. Residues 60-80 (LVGVIIGGALALFLVVALGVV) traverse the membrane as a helical segment. The Cytoplasmic segment spans residues 81-469 (PYFFLHNTRD…IDLENDSTTS (389 aa)). The 155-residue stretch at 103 to 257 (TLIFTDIESS…RTSNMAARTE (155 aa)) folds into the Guanylate cyclase domain. Positions 108 and 151 each coordinate Mg(2+).

This sequence belongs to the adenylyl cyclase class-3 family. The cofactor is Mg(2+).

Its subcellular location is the cell membrane. The enzyme catalyses ATP = 3',5'-cyclic AMP + diphosphate. Its function is as follows. Could act as a receptor for an unknown ligand. This Trypanosoma equiperdum protein is Receptor-type adenylate cyclase (ESAG4C).